The primary structure comprises 436 residues: Chaperone SurA (436 aa).

An N-terminal signal peptide occupies residues Met1–Ala30. PpiC domains follow at residues Glu180–Asp281 and Val291–Glu389.

Its subcellular location is the periplasm. It carries out the reaction [protein]-peptidylproline (omega=180) = [protein]-peptidylproline (omega=0). Chaperone involved in the correct folding and assembly of outer membrane proteins. Recognizes specific patterns of aromatic residues and the orientation of their side chains, which are found more frequently in integral outer membrane proteins. May act in both early periplasmic and late outer membrane-associated steps of protein maturation. The sequence is that of Chaperone SurA from Thiobacillus denitrificans (strain ATCC 25259 / T1).